Consider the following 478-residue polypeptide: Vitronectin (478 aa).

Positions 1-19 (MAPLRPFFILALVAWVSLA) are cleaved as a signal peptide. In terms of domain architecture, SMB spans 20–63 (DQESCKGRCTQGFMASKKCQCDELCTYYQSCCADYMEQCKPQVT). 7 cysteine pairs are disulfide-bonded: Cys24/Cys28, Cys24/Cys40, Cys28/Cys58, Cys38/Cys40, Cys38/Cys51, Cys44/Cys50, and Cys51/Cys58. Residues 64-66 (RGD) carry the Cell attachment site motif. A Phosphothreonine modification is found at Thr69. Sulfotyrosine is present on residues Tyr75, Tyr78, and Tyr80. Residues 82–153 (EEPKNNTNTG…QGTPEFPEEE (72 aa)) are disordered. N-linked (GlcNAc...) asparagine glycosylation is present at Asn86. Residues 86 to 99 (NNTNTGVQPENTSP) are compositionally biased toward polar residues. Basic and acidic residues predominate over residues 131 to 141 (EQQEEILRPDT). 3 Hemopexin repeats span residues 157 to 201 (GKPF…VWGI), 202 to 249 (EGPI…FSGI), and 250 to 304 (PDNV…FEHF). 2 N-linked (GlcNAc...) asparagine glycosylation sites follow: Asn168 and Asn241. Tyr278 and Tyr281 each carry sulfotyrosine. A disulfide bond links Cys292 and Cys431. Ser311 and Ser362 each carry phosphoserine. A disordered region spans residues 359-395 (LSHSAQAKKQKSKRRSRKRYRSRRGRGHRRSQSSNSR). Residues 364-389 (QAKKQKSKRRSRKRYRSRRGRGHRRS) show a composition bias toward basic residues. Positions 366–399 (KKQKSKRRSRKRYRSRRGRGHRRSQSSNSRRSSR) are heparin-binding. Position 398 is a phosphoserine; by PKA (Ser398). A sulfotyrosine mark is found at Tyr416, Tyr419, and Tyr421. The Hemopexin 4 repeat unit spans residues 420 to 473 (DYDMDWLVPATCEPIQSVYFFSGDKYYRVNLRTRRVDSVNPPYPRSIAQYWLGC).

As to quaternary structure, interacts with SERPINE1/PAI1, insulin and C1QBP. Post-translationally, sulfated on tyrosine residues. In terms of processing, N- and O-glycosylated. It has been suggested that the active SMB domain may be permitted considerable disulfide bond heterogeneity or variability, thus two alternate disulfide patterns based on 3D structures are described with 1 disulfide bond conserved in both. As to expression, plasma.

It localises to the secreted. The protein localises to the extracellular space. Vitronectin is a cell adhesion and spreading factor found in serum and tissues. Vitronectin interact with glycosaminoglycans and proteoglycans. Is recognized by certain members of the integrin family and serves as a cell-to-substrate adhesion molecule. Inhibitor of the membrane-damaging effect of the terminal cytolytic complement pathway. In Mus musculus (Mouse), this protein is Vitronectin (Vtn).